A 527-amino-acid chain; its full sequence is Putative BTB/POZ domain and WD-repeat protein R783 (527 aa).

Residues 45–115 (TDVTIVLDDG…FYSQNTDTRN (71 aa)) enclose the BTB domain. WD repeat units follow at residues 215–266 (IHGD…VEAS), 272–310 (NVKT…LIKT), 313–353 (KHKN…IVRC), 355–391 (ISPV…FLFK), and 436–476 (YCPS…DNKY).

Belongs to the mimivirus BTB/WD family.

The chain is Putative BTB/POZ domain and WD-repeat protein R783 from Acanthamoeba polyphaga (Amoeba).